A 382-amino-acid polypeptide reads, in one-letter code: N-acetyldiaminopimelate deacetylase (382 aa).

Aspartate 73 is an active-site residue. Glutamate 132 acts as the Proton acceptor in catalysis.

This sequence belongs to the peptidase M20A family. N-acetyldiaminopimelate deacetylase subfamily.

The catalysed reaction is N-acetyl-(2S,6S)-2,6-diaminopimelate + H2O = (2S,6S)-2,6-diaminopimelate + acetate. It participates in amino-acid biosynthesis; L-lysine biosynthesis via DAP pathway; LL-2,6-diaminopimelate from (S)-tetrahydrodipicolinate (acetylase route): step 3/3. Catalyzes the conversion of N-acetyl-diaminopimelate to diaminopimelate and acetate. The protein is N-acetyldiaminopimelate deacetylase of Oenococcus oeni (strain ATCC BAA-331 / PSU-1).